The following is a 432-amino-acid chain: Peptidyl-prolyl cis-trans isomerase cyp6 (432 aa).

The 168-residue stretch at 1–168 (MSVLIETTVG…RDIRIKHTII (168 aa)) folds into the PPIase cyclophilin-type domain. The residue at position 206 (S206) is a Phosphoserine. Residues 244–322 (NVLFVCKLNP…SRIHVDFSQS (79 aa)) form the RRM domain. The interval 330-432 (YNSNRDRKRS…DRRYRDDRYR (103 aa)) is disordered. Basic and acidic residues-rich tracts occupy residues 341 to 366 (SRSD…DDYR), 373 to 395 (DHRD…DDRS), and 406 to 432 (NCDD…DRYR).

The protein belongs to the cyclophilin-type PPIase family. PPIL4 subfamily.

The protein resides in the nucleus. The catalysed reaction is [protein]-peptidylproline (omega=180) = [protein]-peptidylproline (omega=0). PPIases accelerate the folding of proteins. It catalyzes the cis-trans isomerization of proline imidic peptide bonds in oligopeptides. This Schizosaccharomyces pombe (strain 972 / ATCC 24843) (Fission yeast) protein is Peptidyl-prolyl cis-trans isomerase cyp6 (cyp6).